A 257-amino-acid chain; its full sequence is MKEKLTIIKVGGKIVEEESTLNQLLADFSAIEGYKLLVHGGGRSATRLAAQLGIESKMVNGRRITDAETLKVVTMVYGGLVNKNIVAGLQAKGVNAIGLTGADMNVIRSVKRPVKDVDYGFVGDVEKVNAGFLAALIRQGIVPVMAPLTHDGKGSMLNTNADTIAGETAKALASLFDVTLVYCFEKKGVLRDENDDDSVIPVITPEEFKEFVAQGIIQGGMIPKLENSFSAIDAGVSQVVITLASAINEGSGTVIKK.

Substrate is bound by residues 41–42 (GG), R63, and N158.

Belongs to the acetylglutamate kinase family. ArgB subfamily.

The protein resides in the cytoplasm. The catalysed reaction is N-acetyl-L-glutamate + ATP = N-acetyl-L-glutamyl 5-phosphate + ADP. The protein operates within amino-acid biosynthesis; L-arginine biosynthesis; N(2)-acetyl-L-ornithine from L-glutamate: step 2/4. Catalyzes the ATP-dependent phosphorylation of N-acetyl-L-glutamate. This chain is Acetylglutamate kinase, found in Phocaeicola vulgatus (strain ATCC 8482 / DSM 1447 / JCM 5826 / CCUG 4940 / NBRC 14291 / NCTC 11154) (Bacteroides vulgatus).